The primary structure comprises 256 residues: uncharacterized protein (256 aa).

The next 2 helical transmembrane spans lie at Ile-155 to Leu-175 and Ile-203 to Ile-223.

It localises to the cell membrane. This is an uncharacterized protein from Mycobacterium bovis (strain ATCC BAA-935 / AF2122/97).